Consider the following 968-residue polypeptide: Probable histidine kinase 1 (968 aa).

Coiled-coil stretches lie at residues 89–120 (LLKEQIGLLCQQRKEIEQRKQQILEEQQFQDE) and 169–204 (KERAMQLEKTLEASLQRERSLEEKLEENIKNLQSHT). Residues 372-655 (TMSHEIRSPL…TFSFVLPCKI (284 aa)) enclose the Histidine kinase domain. A Phosphohistidine; by autocatalysis modification is found at histidine 375. The tract at residues 737-757 (STNSASTAHQSNGPSVSRTNK) is disordered. The span at 738–754 (TNSASTAHQSNGPSVSR) shows a compositional bias: polar residues. Positions 818-965 (KILLVEDNKV…NIKECLQQYL (148 aa)) constitute a Response regulatory domain. Aspartate 867 carries the 4-aspartylphosphate modification.

Activation probably requires a transfer of a phosphate group between a His in the transmitter domain and an Asp of the receiver domain.

The catalysed reaction is ATP + protein L-histidine = ADP + protein N-phospho-L-histidine.. In terms of biological role, cytokinin receptor related to bacterial two-component regulators. Functions as a histidine kinase and transmits the stress signal to a downstream MAPK cascade. The protein is Probable histidine kinase 1 of Oryza sativa subsp. indica (Rice).